Consider the following 181-residue polypeptide: uncharacterized protein (181 aa).

Residues 1–159 (MTVHHFTFHI…KACWMMQSLT (159 aa)) enclose the N-acetyltransferase domain.

It belongs to the acetyltransferase family.

This is an uncharacterized protein from Escherichia coli (strain K12).